The chain runs to 179 residues: Large ribosomal subunit protein uL5 (179 aa).

It belongs to the universal ribosomal protein uL5 family. Part of the 50S ribosomal subunit; part of the 5S rRNA/L5/L18/L25 subcomplex. Contacts the 5S rRNA and the P site tRNA. Forms a bridge to the 30S subunit in the 70S ribosome.

Functionally, this is one of the proteins that bind and probably mediate the attachment of the 5S RNA into the large ribosomal subunit, where it forms part of the central protuberance. In the 70S ribosome it contacts protein S13 of the 30S subunit (bridge B1b), connecting the 2 subunits; this bridge is implicated in subunit movement. Contacts the P site tRNA; the 5S rRNA and some of its associated proteins might help stabilize positioning of ribosome-bound tRNAs. The protein is Large ribosomal subunit protein uL5 of Buchnera aphidicola subsp. Acyrthosiphon pisum (strain APS) (Acyrthosiphon pisum symbiotic bacterium).